Consider the following 581-residue polypeptide: Bestrophin-1 (581 aa).

The Cytoplasmic portion of the chain corresponds to 1 to 31; that stretch reads MTVTYSSQVANARLGSFSRLLLCWRGSIYKL. Position 10 (Ala10) interacts with Ca(2+). Residues 32–51 form a helical membrane-spanning segment; sequence LYGEFLIFLLCYYIIRFIYR. At 52 to 60 the chain is on the extracellular side; the sequence is MALTDEQQV. Residues 61–82 form a helical membrane-spanning segment; it reads IFEKLTLYCDSYIQLIPISFVL. Topologically, residues 83 to 237 are cytoplasmic; sequence GFYVTLVVTR…DWISVPLVYT (155 aa). The helical transmembrane segment at 238–255 threads the bilayer; it reads QVVTVAVYSFFLACLVGR. The Extracellular segment spans residues 256–274; sequence QFLNPAKAYPGHEMDLVVP. Residues 275-288 traverse the membrane as a helical segment; the sequence is LFTFLQFFFYAGWL. Residues 289-581 lie on the Cytoplasmic side of the membrane; that stretch reads KVAEQLINPF…ALENRDEAHS (293 aa). Gln293, Asn296, Asp301, and Asp304 together coordinate Ca(2+). Positions 416–440 are disordered; the sequence is EGHFHEGHPKNLRGARLDSSDQEDS.

This sequence belongs to the anion channel-forming bestrophin (TC 1.A.46) family. Calcium-sensitive chloride channel subfamily. In terms of assembly, interacts with YWHAG; this interaction promotes the ligand-gated L-glutamate channel activity leading to the positive regulation of NMDA glutamate receptor activity through the L-glutamate secretion. In terms of processing, phosphorylated (in vitro). Post-translationally, dephosphorylated (in vitro) by PP2A.

It is found in the cell membrane. The protein resides in the basolateral cell membrane. It catalyses the reaction chloride(in) = chloride(out). The enzyme catalyses hydrogencarbonate(in) = hydrogencarbonate(out). The catalysed reaction is 4-aminobutanoate(in) = 4-aminobutanoate(out). It carries out the reaction L-glutamate(out) = L-glutamate(in). Ligand-gated anion channel that allows the movement of anions across cell membranes when activated by calcium (Ca2+). Allows the movement of chloride and hydrogencarbonate. Found in a partially open conformation leading to significantly smaller chloride movement. Upon F2R/PAR-1 activation, the sequestered calcium is released into the cytosol of astrocytes, leading to the (Ca2+)-dependent release of L-glutamate into the synaptic cleft that targets the neuronal postsynaptic GRIN2A/NMDAR receptor resulting in the synaptic plasticity regulation. Upon activation of the norepinephrine-alpha-1 adrenergic receptor signaling pathway, transports as well D-serine than L-glutamate in a (Ca2+)-dependent manner, leading to activation of adjacent NMDAR receptors and therefore regulates the heterosynaptic long-term depression and metaplasticity during initial memory acquisition. Releases the 4-aminobutanoate neurotransmitter in a (Ca2+)-dependent manner, and participates in its tonic release from cerebellar glial cells. The sequence is that of Bestrophin-1 from Sus scrofa (Pig).